The sequence spans 195 residues: Holliday junction branch migration complex subunit RuvA (195 aa).

The domain I stretch occupies residues 1–64 (MIGRIAGLLL…EDAHLLFGFM (64 aa)). Residues 65–140 (TEPERVLFRQ…KISPAITLPE (76 aa)) form a domain II region. Positions 140-144 (ETGTA) are flexible linker. Residues 145-195 (MASSTDKDILNALSALGYNDREANWAVGQLSEGVTVSDGIMQSLRLLSKAK) are domain III.

Belongs to the RuvA family. As to quaternary structure, homotetramer. Forms an RuvA(8)-RuvB(12)-Holliday junction (HJ) complex. HJ DNA is sandwiched between 2 RuvA tetramers; dsDNA enters through RuvA and exits via RuvB. An RuvB hexamer assembles on each DNA strand where it exits the tetramer. Each RuvB hexamer is contacted by two RuvA subunits (via domain III) on 2 adjacent RuvB subunits; this complex drives branch migration. In the full resolvosome a probable DNA-RuvA(4)-RuvB(12)-RuvC(2) complex forms which resolves the HJ.

The protein localises to the cytoplasm. Its function is as follows. The RuvA-RuvB-RuvC complex processes Holliday junction (HJ) DNA during genetic recombination and DNA repair, while the RuvA-RuvB complex plays an important role in the rescue of blocked DNA replication forks via replication fork reversal (RFR). RuvA specifically binds to HJ cruciform DNA, conferring on it an open structure. The RuvB hexamer acts as an ATP-dependent pump, pulling dsDNA into and through the RuvAB complex. HJ branch migration allows RuvC to scan DNA until it finds its consensus sequence, where it cleaves and resolves the cruciform DNA. This is Holliday junction branch migration complex subunit RuvA from Nitrosomonas europaea (strain ATCC 19718 / CIP 103999 / KCTC 2705 / NBRC 14298).